Consider the following 276-residue polypeptide: MRLQRNSIICALVFLVSFVLGDVNIVSPSSKATFSPSGGTVSVPVEWMDNGAYPSLSKISTFTFSLCTGPNNNIDCVAVLASKITPSELTQDDKVYSYTAEFASTLTGNGQYYIQVFAQVDGQGYTIHYTPRFQLTSMGGVTAYTYSATTEPTPQTSIQTTTTNNAQATTIDSRSFTVPYTKQTGTSRFAPMQMQPNTKVTATTWTRKFATSAVTYYSTFGSLPEQATTITPGWSYTISSGVNYATPASMPSDNGGWYKPSKRLSLSARKINMRKV.

Residues 1–21 (MRLQRNSIICALVFLVSFVLG) form the signal peptide.

The protein belongs to the KRE9/KNH1 family. Post-translationally, O-glycosylated.

The protein localises to the secreted. It is found in the cell wall. Involved in cell wall beta(1-&gt;6) glucan synthesis. This Saccharomyces cerevisiae (strain ATCC 204508 / S288c) (Baker's yeast) protein is Cell wall synthesis protein KRE9.